The primary structure comprises 952 residues: Meiosis-specific coiled-coil domain-containing protein MEIOC (952 aa).

Disordered regions lie at residues Met-1 to Glu-23, Gln-609 to Leu-629, and Val-933 to His-952. Basic and acidic residues predominate over residues Tyr-617–Asp-627. Polar residues predominate over residues Ser-936–His-952.

Interacts with YTHDC2; binds transcript that regulate the mitotic cell cycle inhibiting progression into metaphase, thereby allowing meiotic prophase to proceed normally. Interacts with RBM46. As to expression, expressed in fetal ovaries. Expressed in testis.

The protein localises to the cytoplasm. Its subcellular location is the nucleus. Its function is as follows. Is required for meiosis completion in both male and female germ cells. Confers stability to numerous meiotic mRNAs in gonads allowing proper initiation and progression into meiosis prophase I. The function may involve YTHDC2 and is independent of induction by retinoic acid (RA). Maintains an extended meiotic prophase I by properly promoting the transition from a mitotic to a meiotic cell cycle program by binding transcripts through its interaction with YTHDC2 that regulate the mitotic cell cycle. The sequence is that of Meiosis-specific coiled-coil domain-containing protein MEIOC from Homo sapiens (Human).